Here is a 278-residue protein sequence, read N- to C-terminus: 4-diphosphocytidyl-2-C-methyl-D-erythritol kinase (278 aa).

Lysine 9 is an active-site residue. Residue 93–103 (PISAGLAGGSS) participates in ATP binding. Aspartate 135 is a catalytic residue.

This sequence belongs to the GHMP kinase family. IspE subfamily.

The enzyme catalyses 4-CDP-2-C-methyl-D-erythritol + ATP = 4-CDP-2-C-methyl-D-erythritol 2-phosphate + ADP + H(+). Its pathway is isoprenoid biosynthesis; isopentenyl diphosphate biosynthesis via DXP pathway; isopentenyl diphosphate from 1-deoxy-D-xylulose 5-phosphate: step 3/6. Its function is as follows. Catalyzes the phosphorylation of the position 2 hydroxy group of 4-diphosphocytidyl-2C-methyl-D-erythritol. The polypeptide is 4-diphosphocytidyl-2-C-methyl-D-erythritol kinase (Finegoldia magna (strain ATCC 29328 / DSM 20472 / WAL 2508) (Peptostreptococcus magnus)).